A 271-amino-acid chain; its full sequence is Plasmanylethanolamine desaturase 1 (271 aa).

The next 3 helical transmembrane spans lie at 48 to 68, 75 to 95, and 162 to 182; these read WCCV…LLLL, PLVM…SGLV, and VLEQ…FGTF. Positions 187–191 match the Histidine box-1 motif; that stretch reads HKWSH. Residues 214 to 218 carry the Histidine box-2 motif; sequence HHRIH.

Belongs to the fatty acid desaturase CarF family.

The protein resides in the endoplasmic reticulum membrane. The catalysed reaction is a 1-(1,2-saturated alkyl)-2-acyl-sn-glycero-3-phosphoethanolamine + 2 Fe(II)-[cytochrome b5] + O2 + 2 H(+) = a 1-O-(1Z-alkenyl)-2-acyl-sn-glycero-3-phosphoethanolamine + 2 Fe(III)-[cytochrome b5] + 2 H2O. The enzyme catalyses a 1-O-hexadecyl-2-acyl-sn-glycero-3-phosphoethanolamine + 2 Fe(II)-[cytochrome b5] + O2 + 2 H(+) = a 1-O-(1Z-hexadecenyl)-2-acyl-sn-glycero-3-phosphoethanolamine + 2 Fe(III)-[cytochrome b5] + 2 H2O. It carries out the reaction a 1-O-octadecyl-2-acyl-sn-glycero-3-phosphoethanolamine + 2 Fe(II)-[cytochrome b5] + O2 + 2 H(+) = a 1-O-(1Z-octadecenyl)-2-acyl-sn-glycero-3-phosphoethanolamine + 2 Fe(III)-[cytochrome b5] + 2 H2O. It catalyses the reaction a 1-O-(9Z-octadecenyl)-2-acyl-sn-glycero-3-phosphoethanolamine + 2 Fe(II)-[cytochrome b5] + O2 + 2 H(+) = a 1-O-(1Z,9Z-octadecadienyl)-2-acyl-sn-glycero-3-phosphoethanolamine + 2 Fe(III)-[cytochrome b5] + 2 H2O. It functions in the pathway lipid metabolism; fatty acid metabolism. Functionally, plasmanylethanolamine desaturase involved in plasmalogen biogenesis in the endoplasmic reticulum membrane. Plasmalogens are glycerophospholipids with a hydrocarbon chain linked by a vinyl ether bond at the glycerol sn-1 position, and are involved in antioxidative and signaling mechanisms. The sequence is that of Plasmanylethanolamine desaturase 1 from Bos taurus (Bovine).